Consider the following 382-residue polypeptide: Bifunctional enzyme IspD/IspF (382 aa).

The segment at 1 to 226 (MTLAVLIVAA…RSTMDNIPDI (226 aa)) is 2-C-methyl-D-erythritol 4-phosphate cytidylyltransferase. Residues 227-382 (RLGNGYDVHR…ALATATLVRA (156 aa)) form a 2-C-methyl-D-erythritol 2,4-cyclodiphosphate synthase region. Residues D233 and H235 each coordinate a divalent metal cation. Residues 233 to 235 (DVH) and 259 to 260 (HS) contribute to the 4-CDP-2-C-methyl-D-erythritol 2-phosphate site. H267 is a binding site for a divalent metal cation. Residues 281-283 (DIG), 357-360 (TTSE), F364, and R367 contribute to the 4-CDP-2-C-methyl-D-erythritol 2-phosphate site.

It in the N-terminal section; belongs to the IspD/TarI cytidylyltransferase family. IspD subfamily. The protein in the C-terminal section; belongs to the IspF family. Requires a divalent metal cation as cofactor.

The catalysed reaction is 2-C-methyl-D-erythritol 4-phosphate + CTP + H(+) = 4-CDP-2-C-methyl-D-erythritol + diphosphate. The enzyme catalyses 4-CDP-2-C-methyl-D-erythritol 2-phosphate = 2-C-methyl-D-erythritol 2,4-cyclic diphosphate + CMP. The protein operates within isoprenoid biosynthesis; isopentenyl diphosphate biosynthesis via DXP pathway; isopentenyl diphosphate from 1-deoxy-D-xylulose 5-phosphate: step 2/6. It participates in isoprenoid biosynthesis; isopentenyl diphosphate biosynthesis via DXP pathway; isopentenyl diphosphate from 1-deoxy-D-xylulose 5-phosphate: step 4/6. Functionally, bifunctional enzyme that catalyzes the formation of 4-diphosphocytidyl-2-C-methyl-D-erythritol from CTP and 2-C-methyl-D-erythritol 4-phosphate (MEP) (IspD), and catalyzes the conversion of 4-diphosphocytidyl-2-C-methyl-D-erythritol 2-phosphate (CDP-ME2P) to 2-C-methyl-D-erythritol 2,4-cyclodiphosphate (ME-CPP) with a corresponding release of cytidine 5-monophosphate (CMP) (IspF). The chain is Bifunctional enzyme IspD/IspF from Ruegeria sp. (strain TM1040) (Silicibacter sp.).